A 285-amino-acid polypeptide reads, in one-letter code: 3-methyl-2-oxobutanoate hydroxymethyltransferase 1 (285 aa).

Residues Asp49 and Asp88 each coordinate Mg(2+). 3-methyl-2-oxobutanoate-binding positions include 49–50, Asp88, and Lys118; that span reads DS. Residue Glu120 coordinates Mg(2+). Residue Glu187 is the Proton acceptor of the active site.

This sequence belongs to the PanB family. Homodecamer; pentamer of dimers. Mg(2+) serves as cofactor.

Its subcellular location is the cytoplasm. It carries out the reaction 3-methyl-2-oxobutanoate + (6R)-5,10-methylene-5,6,7,8-tetrahydrofolate + H2O = 2-dehydropantoate + (6S)-5,6,7,8-tetrahydrofolate. It participates in cofactor biosynthesis; (R)-pantothenate biosynthesis; (R)-pantoate from 3-methyl-2-oxobutanoate: step 1/2. Functionally, catalyzes the reversible reaction in which hydroxymethyl group from 5,10-methylenetetrahydrofolate is transferred onto alpha-ketoisovalerate to form ketopantoate. The polypeptide is 3-methyl-2-oxobutanoate hydroxymethyltransferase 1 (Burkholderia lata (strain ATCC 17760 / DSM 23089 / LMG 22485 / NCIMB 9086 / R18194 / 383)).